Consider the following 97-residue polypeptide: YcgL domain-containing protein APP7_0754 (97 aa).

One can recognise a YcgL domain in the interval 6 to 90; that stretch reads NLCAIYKSPK…PPENLLKTFL (85 aa).

The chain is YcgL domain-containing protein APP7_0754 from Actinobacillus pleuropneumoniae serotype 7 (strain AP76).